The chain runs to 318 residues: Protoheme IX farnesyltransferase (318 aa).

A run of 9 helical transmembrane segments spans residues 34–54 (VMSL…GQIN), 55–75 (PVIG…SGAL), 95–115 (IPAG…LSAF), 118–138 (IILG…TIFF), 155–175 (IVIG…CVTG), 182–202 (IVLF…LALF), 228–250 (IVVY…FASL), 254–273 (AFAT…VLRM), and 287–307 (FAFS…DYMI).

Belongs to the UbiA prenyltransferase family. Protoheme IX farnesyltransferase subfamily.

The protein localises to the cell inner membrane. It carries out the reaction heme b + (2E,6E)-farnesyl diphosphate + H2O = Fe(II)-heme o + diphosphate. It participates in porphyrin-containing compound metabolism; heme O biosynthesis; heme O from protoheme: step 1/1. Functionally, converts heme B (protoheme IX) to heme O by substitution of the vinyl group on carbon 2 of heme B porphyrin ring with a hydroxyethyl farnesyl side group. In Sinorhizobium fredii (strain NBRC 101917 / NGR234), this protein is Protoheme IX farnesyltransferase.